The following is a 1872-amino-acid chain: Plexin-A3 (1872 aa).

A signal peptide spans 1–19; sequence MHTVCLLPLLFFTIGGCLG. The Sema domain maps to 20 to 489; sequence SSRPFRTFVV…SEKQVSQLPV (470 aa). The Extracellular portion of the chain corresponds to 20–1220; that stretch reads SSRPFRTFVV…ITADRALTLP (1201 aa). N-linked (GlcNAc...) asparagine glycosylation occurs at N60. Disulfide bonds link C78/C87, C113/C121, C267/C388, C283/C339, C357/C376, C492/C509, C498/C540, C501/C518, and C512/C524. A glycan (N-linked (GlcNAc...) asparagine) is linked at N549. C575 and C595 form a disulfide bridge. IPT/TIG domains follow at residues 841-934, 936-1021, 1024-1123, and 1126-1212; these read PRIT…YSFV, PTLD…YTYT, PTVT…FTYY, and PSFE…LHIT. N-linked (GlcNAc...) asparagine glycosylation is present at N1163. A helical transmembrane segment spans residues 1221 to 1241; the sequence is AMVGLAAGGGLLLLAITVVLV. Residues 1240–1294 adopt a coiled-coil conformation; it reads LVAYKRKTQDADRTLKRLQLQMDNLESRVALECKEAFAELQTDINELTNHMDGVQ. Topologically, residues 1242-1872 are cytoplasmic; that stretch reads AYKRKTQDAD…QIITLVSSSS (631 aa). S1597 carries the phosphoserine modification.

The protein belongs to the plexin family.

It localises to the cell membrane. In terms of biological role, coreceptor for SEMA3A and SEMA3F. Necessary for signaling by class 3 semaphorins and subsequent remodeling of the cytoskeleton. Plays a role in axon guidance in the developing nervous system. Regulates the migration of sympathetic neurons, but not of neural crest precursors. Required for normal dendrite spine morphology in pyramidal neurons. May play a role in regulating semaphorin-mediated programmed cell death in the developing nervous system. Class 3 semaphorins bind to a complex composed of a neuropilin and a plexin. The plexin modulates the affinity of the complex for specific semaphorins, and its cytoplasmic domain is required for the activation of down-stream signaling events in the cytoplasm. This chain is Plexin-A3 (Plxna3), found in Rattus norvegicus (Rat).